The sequence spans 308 residues: Type II restriction enzyme MamI (308 aa).

The catalysed reaction is Endonucleolytic cleavage of DNA to give specific double-stranded fragments with terminal 5'-phosphates.. Functionally, a P subtype restriction enzyme that recognizes the double-stranded sequence 5'-GATNNNNATC-3' and cleaves after N-5. The polypeptide is Type II restriction enzyme MamI (Microbacterium ammoniaphilum).